The sequence spans 171 residues: Large ribosomal subunit protein uL10 (171 aa).

This sequence belongs to the universal ribosomal protein uL10 family. In terms of assembly, part of the ribosomal stalk of the 50S ribosomal subunit. The N-terminus interacts with L11 and the large rRNA to form the base of the stalk. The C-terminus forms an elongated spine to which L12 dimers bind in a sequential fashion forming a multimeric L10(L12)X complex.

Functionally, forms part of the ribosomal stalk, playing a central role in the interaction of the ribosome with GTP-bound translation factors. This Erythrobacter litoralis (strain HTCC2594) protein is Large ribosomal subunit protein uL10.